A 343-amino-acid polypeptide reads, in one-letter code: Cyclin-Y-like protein 1 (343 aa).

The segment at Met1–Ile48 is disordered. A compositionally biased stretch (basic and acidic residues) spans Ala17–Glu28. Positions Glu145 to Asn267 constitute a Cyclin N-terminal domain.

It belongs to the cyclin family. Cyclin Y subfamily.

The protein localises to the cell membrane. Its function is as follows. Key regulator of Wnt signaling implicated in various biological processes, such as embryonic neurogenesis. This is Cyclin-Y-like protein 1 (ccnyl1) from Xenopus tropicalis (Western clawed frog).